A 250-amino-acid chain; its full sequence is UDP-2,3-diacylglucosamine hydrolase (250 aa).

Aspartate 8, histidine 10, aspartate 41, asparagine 79, and histidine 114 together coordinate Mn(2+). Position 79-80 (79-80 (NR)) interacts with substrate. Substrate contacts are provided by aspartate 122, serine 160, aspartate 172, glutamine 175, and histidine 203. Residues histidine 203 and histidine 205 each contribute to the Mn(2+) site.

Belongs to the LpxH family. Mn(2+) serves as cofactor.

The protein resides in the cell inner membrane. The catalysed reaction is UDP-2-N,3-O-bis[(3R)-3-hydroxytetradecanoyl]-alpha-D-glucosamine + H2O = 2-N,3-O-bis[(3R)-3-hydroxytetradecanoyl]-alpha-D-glucosaminyl 1-phosphate + UMP + 2 H(+). Its pathway is glycolipid biosynthesis; lipid IV(A) biosynthesis; lipid IV(A) from (3R)-3-hydroxytetradecanoyl-[acyl-carrier-protein] and UDP-N-acetyl-alpha-D-glucosamine: step 4/6. In terms of biological role, hydrolyzes the pyrophosphate bond of UDP-2,3-diacylglucosamine to yield 2,3-diacylglucosamine 1-phosphate (lipid X) and UMP by catalyzing the attack of water at the alpha-P atom. Involved in the biosynthesis of lipid A, a phosphorylated glycolipid that anchors the lipopolysaccharide to the outer membrane of the cell. The chain is UDP-2,3-diacylglucosamine hydrolase from Xylella fastidiosa (strain M23).